A 338-amino-acid polypeptide reads, in one-letter code: Glyceraldehyde-3-phosphate dehydrogenase 2 (338 aa).

NAD(+) is bound by residues 13-14, Asp35, and Arg80; that span reads RI. D-glyceraldehyde 3-phosphate contacts are provided by residues 151 to 153, Thr182, 211 to 212, and Arg234; these read SCT and TG. The active-site Nucleophile is Cys152. Asn316 is a binding site for NAD(+).

Belongs to the glyceraldehyde-3-phosphate dehydrogenase family. Homotetramer.

It localises to the cytoplasm. It carries out the reaction D-glyceraldehyde 3-phosphate + phosphate + NAD(+) = (2R)-3-phospho-glyceroyl phosphate + NADH + H(+). Its pathway is carbohydrate degradation; glycolysis; pyruvate from D-glyceraldehyde 3-phosphate: step 1/5. Its activity is regulated as follows. Inhibited by koningic acid through the interaction of cysteine residues with koningic acid even at very low concentrations. This Trichoderma koningii (Hypocrea koningii) protein is Glyceraldehyde-3-phosphate dehydrogenase 2 (gpd2).